A 289-amino-acid chain; its full sequence is Probable endonuclease 4 (289 aa).

9 residues coordinate Zn(2+): His75, His115, Glu153, Asp187, His190, His224, Asp237, His239, and Glu269.

Belongs to the AP endonuclease 2 family. Zn(2+) is required as a cofactor.

It catalyses the reaction Endonucleolytic cleavage to 5'-phosphooligonucleotide end-products.. Endonuclease IV plays a role in DNA repair. It cleaves phosphodiester bonds at apurinic or apyrimidinic (AP) sites, generating a 3'-hydroxyl group and a 5'-terminal sugar phosphate. The polypeptide is Probable endonuclease 4 (Chlamydia caviae (strain ATCC VR-813 / DSM 19441 / 03DC25 / GPIC) (Chlamydophila caviae)).